A 55-amino-acid chain; its full sequence is Large ribosomal subunit protein bL33 (55 aa).

This sequence belongs to the bacterial ribosomal protein bL33 family.

This chain is Large ribosomal subunit protein bL33, found in Vibrio atlanticus (strain LGP32) (Vibrio splendidus (strain Mel32)).